We begin with the raw amino-acid sequence, 194 residues long: SRP-independent targeting protein 3 homolog (194 aa).

2 consecutive transmembrane segments (helical) span residues 43-63 and 110-130; these read ILYATVNIVQIGIFLYTKIII and LVTIATTLFMHLYMGYAPPLL.

Belongs to the PHO88 family.

Its subcellular location is the endoplasmic reticulum membrane. Functionally, may function in a SRP (signal recognition particle) and GET (guided entry of tail-anchored proteins) independent pathway for targeting a broad range of substrate proteins to the endoplasmic reticulum. Involved in inorganic phosphate uptake. Also involved in telomere length regulation and maintenance. In Schizosaccharomyces pombe (strain 972 / ATCC 24843) (Fission yeast), this protein is SRP-independent targeting protein 3 homolog.